Reading from the N-terminus, the 317-residue chain is Ferrochelatase (317 aa).

Residues His-184 and Glu-259 each coordinate Fe cation.

Belongs to the ferrochelatase family.

It is found in the cytoplasm. It catalyses the reaction heme b + 2 H(+) = protoporphyrin IX + Fe(2+). Its pathway is porphyrin-containing compound metabolism; protoheme biosynthesis; protoheme from protoporphyrin-IX: step 1/1. Catalyzes the ferrous insertion into protoporphyrin IX. The sequence is that of Ferrochelatase from Chlamydia muridarum (strain MoPn / Nigg).